Consider the following 214-residue polypeptide: Pyridoxine/pyridoxamine 5'-phosphate oxidase (214 aa).

Residues 7 to 10 and Lys-65 each bind substrate; that span reads REEY. Residues 60 to 65, 75 to 76, Arg-81, Lys-82, and Gln-104 contribute to the FMN site; these read RTVLLK and FT. The substrate site is built by Tyr-122, Arg-126, and Ser-130. Residues 139–140 and Trp-184 contribute to the FMN site; that span reads QS. Residue 190–192 coordinates substrate; that stretch reads RLH. Arg-194 lines the FMN pocket.

This sequence belongs to the pyridoxamine 5'-phosphate oxidase family. As to quaternary structure, homodimer. FMN is required as a cofactor.

It carries out the reaction pyridoxamine 5'-phosphate + O2 + H2O = pyridoxal 5'-phosphate + H2O2 + NH4(+). The catalysed reaction is pyridoxine 5'-phosphate + O2 = pyridoxal 5'-phosphate + H2O2. It functions in the pathway cofactor metabolism; pyridoxal 5'-phosphate salvage; pyridoxal 5'-phosphate from pyridoxamine 5'-phosphate: step 1/1. It participates in cofactor metabolism; pyridoxal 5'-phosphate salvage; pyridoxal 5'-phosphate from pyridoxine 5'-phosphate: step 1/1. Functionally, catalyzes the oxidation of either pyridoxine 5'-phosphate (PNP) or pyridoxamine 5'-phosphate (PMP) into pyridoxal 5'-phosphate (PLP). The polypeptide is Pyridoxine/pyridoxamine 5'-phosphate oxidase (Crocosphaera subtropica (strain ATCC 51142 / BH68) (Cyanothece sp. (strain ATCC 51142))).